Consider the following 93-residue polypeptide: Alpha-defensin 26 (93 aa).

The N-terminal stretch at 1–19 (MKTLVLLSALFLLAFQVQA) is a signal peptide. Positions 20–58 (DPIQNTDEETNTEVQPQEEDQAVSVSFGNPEGSDLQEES) are excised as a propeptide. The interval 24–55 (NTDEETNTEVQPQEEDQAVSVSFGNPEGSDLQ) is disordered. The span at 25–40 (TDEETNTEVQPQEEDQ) shows a compositional bias: acidic residues. Disulfide bonds link Cys64–Cys92, Cys66–Cys81, and Cys71–Cys91.

The protein belongs to the alpha-defensin family.

It is found in the secreted. In terms of biological role, may have microbicidal activities. This is Alpha-defensin 26 (Defa26) from Mus musculus (Mouse).